The chain runs to 335 residues: Lipase chaperone (335 aa).

A helical transmembrane segment spans residues 1 to 21 (MSGSILLLPLAIALGLGFFIA).

It belongs to the lipase chaperone family.

It localises to the cell inner membrane. In terms of biological role, may be involved in the folding of the extracellular lipase during its passage through the periplasm. This is Lipase chaperone from Stutzerimonas stutzeri (strain A1501) (Pseudomonas stutzeri).